The following is a 592-amino-acid chain: Leucine-rich repeat and immunoglobulin-like domain-containing nogo receptor-interacting protein 3 (592 aa).

Positions 1–24 (MTCWLCVLSLPLLLLPAAPPPAGG) are cleaved as a signal peptide. Residues 25 to 54 (CPARCECTVQTRAVACTRRRLTAVPDGIPA) enclose the LRRNT domain. The Extracellular portion of the chain corresponds to 25-531 (CPARCECTVQ…LDLTTILVST (507 aa)). 11 LRR repeats span residues 55-76 (ETRL…DLAA), 79-100 (ALEE…AFAN), 103-124 (RLRV…VFTR), 127-148 (NLTL…TFQD), 151-172 (SLRR…AFAG), 175-196 (ALEE…SLGH), 207-228 (HLAI…LHLE), 247-268 (NLTS…ALRH), 271-292 (HLTC…SFRD), 295-316 (RLRE…AFLG), and 319-340 (QIRL…TFHS). An N-linked (GlcNAc...) asparagine glycan is attached at asparagine 127. Asparagine 185 is a glycosylation site (N-linked (GlcNAc...) asparagine). Asparagine 247, asparagine 257, and asparagine 276 each carry an N-linked (GlcNAc...) asparagine glycan. Asparagine 324 carries an N-linked (GlcNAc...) asparagine glycan. The LRRCT domain occupies 352–406 (NPLACDCRLLWIVQRRKTLNFDGRLPACATPAEVRGDALRNLPDSVLFEYFVCRK). Residues 407–496 (PKIRERRLQR…GNDTYFATLT (90 aa)) form the Ig-like C2-type domain. A disulfide bond links cysteine 429 and cysteine 480. N-linked (GlcNAc...) asparagine glycans are attached at residues asparagine 488 and asparagine 512. A helical membrane pass occupies residues 532-552 (AMGCITFLGVVLFCFVLLFVW). Residues 553–592 (SRGRGQHKNNFSVEYSFRKVDGPAAAAGQGGARKFNMKMI) are Cytoplasmic-facing.

Its subcellular location is the membrane. This is Leucine-rich repeat and immunoglobulin-like domain-containing nogo receptor-interacting protein 3 (LINGO3) from Homo sapiens (Human).